The sequence spans 508 residues: UBX domain-containing protein 4 (508 aa).

Residues 1–200 (MLWFQGAIPA…PTEDLTVRVE (200 aa)) form an interaction with UBQLN1 region. The Cytoplasmic portion of the chain corresponds to 1 to 413 (MLWFQGAIPA…VHSSSGDFWT (413 aa)). Residues 117–199 (GEASLANGSQ…RPTEDLTVRV (83 aa)) are disordered. Polar residues predominate over residues 122 to 190 (ANGSQSEGSV…QEPSGCSNQR (69 aa)). In terms of domain architecture, UBX spans 315-393 (ERSTVARIQF…ELAPSASVVL (79 aa)). An intramembrane segment occupies 414 to 434 (LLGTVLYPFLAIWRLISNFLF). Topologically, residues 435–508 (SNPPPAQTSV…TWNGNSTQQM (74 aa)) are cytoplasmic. Over residues 450 to 459 (ETSNLASSSN) the composition is skewed to polar residues. The segment at 450–508 (ETSNLASSSNSEKREPVRKRVLEKRGEDFKKEGKIYRLRTQDDGEDENNTWNGNSTQQM) is disordered. Positions 460-491 (SEKREPVRKRVLEKRGEDFKKEGKIYRLRTQD) are enriched in basic and acidic residues. At Thr-489 the chain carries Phosphothreonine. Positions 498-508 (NTWNGNSTQQM) are enriched in polar residues.

In terms of assembly, directly interacts with VCP. Interacts with UBQLN1. Forms a complex with VCP and UBQLN1.

The protein resides in the endoplasmic reticulum membrane. It localises to the nucleus envelope. In terms of biological role, involved in endoplasmic reticulum-associated protein degradation (ERAD). Acts as a platform to recruit both UBQLN1 and VCP to the ER during ERAD. This Bos taurus (Bovine) protein is UBX domain-containing protein 4 (UBXN4).